The chain runs to 202 residues: Pyridoxal 5'-phosphate synthase subunit PdxT (202 aa).

Residue 49-51 coordinates L-glutamine; sequence GES. C81 functions as the Nucleophile in the catalytic mechanism. Residues R110 and 139–140 contribute to the L-glutamine site; that span reads IR. Catalysis depends on charge relay system residues H182 and E184.

This sequence belongs to the glutaminase PdxT/SNO family. In terms of assembly, in the presence of PdxS, forms a dodecamer of heterodimers. Only shows activity in the heterodimer.

The enzyme catalyses aldehydo-D-ribose 5-phosphate + D-glyceraldehyde 3-phosphate + L-glutamine = pyridoxal 5'-phosphate + L-glutamate + phosphate + 3 H2O + H(+). The catalysed reaction is L-glutamine + H2O = L-glutamate + NH4(+). It participates in cofactor biosynthesis; pyridoxal 5'-phosphate biosynthesis. In terms of biological role, catalyzes the hydrolysis of glutamine to glutamate and ammonia as part of the biosynthesis of pyridoxal 5'-phosphate. The resulting ammonia molecule is channeled to the active site of PdxS. The chain is Pyridoxal 5'-phosphate synthase subunit PdxT from Rhodococcus jostii (strain RHA1).